Here is a 399-residue protein sequence, read N- to C-terminus: Acetate kinase (399 aa).

Asn10 lines the Mg(2+) pocket. An ATP-binding site is contributed by Lys17. Arg91 provides a ligand contact to substrate. Catalysis depends on Asp148, which acts as the Proton donor/acceptor. Residues 208-212 (HLGNG), 283-285 (DCR), and 331-335 (GIGEN) each bind ATP. Glu385 lines the Mg(2+) pocket.

The protein belongs to the acetokinase family. Homodimer. Mg(2+) serves as cofactor. Requires Mn(2+) as cofactor.

Its subcellular location is the cytoplasm. The enzyme catalyses acetate + ATP = acetyl phosphate + ADP. Its pathway is metabolic intermediate biosynthesis; acetyl-CoA biosynthesis; acetyl-CoA from acetate: step 1/2. In terms of biological role, catalyzes the formation of acetyl phosphate from acetate and ATP. Can also catalyze the reverse reaction. This chain is Acetate kinase, found in Shewanella oneidensis (strain ATCC 700550 / JCM 31522 / CIP 106686 / LMG 19005 / NCIMB 14063 / MR-1).